Here is a 90-residue protein sequence, read N- to C-terminus: Probable Fe(2+)-trafficking protein (90 aa).

It belongs to the Fe(2+)-trafficking protein family.

Functionally, could be a mediator in iron transactions between iron acquisition and iron-requiring processes, such as synthesis and/or repair of Fe-S clusters in biosynthetic enzymes. The polypeptide is Probable Fe(2+)-trafficking protein (Ectopseudomonas mendocina (strain ymp) (Pseudomonas mendocina)).